Consider the following 252-residue polypeptide: Imidazole glycerol phosphate synthase subunit HisF (252 aa).

Catalysis depends on residues D11 and D130.

Belongs to the HisA/HisF family. In terms of assembly, heterodimer of HisH and HisF.

The protein localises to the cytoplasm. The enzyme catalyses 5-[(5-phospho-1-deoxy-D-ribulos-1-ylimino)methylamino]-1-(5-phospho-beta-D-ribosyl)imidazole-4-carboxamide + L-glutamine = D-erythro-1-(imidazol-4-yl)glycerol 3-phosphate + 5-amino-1-(5-phospho-beta-D-ribosyl)imidazole-4-carboxamide + L-glutamate + H(+). The protein operates within amino-acid biosynthesis; L-histidine biosynthesis; L-histidine from 5-phospho-alpha-D-ribose 1-diphosphate: step 5/9. Functionally, IGPS catalyzes the conversion of PRFAR and glutamine to IGP, AICAR and glutamate. The HisF subunit catalyzes the cyclization activity that produces IGP and AICAR from PRFAR using the ammonia provided by the HisH subunit. The chain is Imidazole glycerol phosphate synthase subunit HisF from Hydrogenobaculum sp. (strain Y04AAS1).